A 372-amino-acid chain; its full sequence is tRNA-specific 2-thiouridylase MnmA (372 aa).

ATP-binding positions include 16–23 and Met42; that span reads GMSGGVDS. Residues 102–104 form an interaction with target base in tRNA region; that stretch reads NPD. Residue Cys107 is the Nucleophile of the active site. A disulfide bridge links Cys107 with Cys205. Residue Gly132 participates in ATP binding. Residues 155-157 are interaction with tRNA; that stretch reads KDQ. Cys205 (cysteine persulfide intermediate) is an active-site residue. An interaction with tRNA region spans residues 317-318; sequence RY.

The protein belongs to the MnmA/TRMU family.

Its subcellular location is the cytoplasm. The catalysed reaction is S-sulfanyl-L-cysteinyl-[protein] + uridine(34) in tRNA + AH2 + ATP = 2-thiouridine(34) in tRNA + L-cysteinyl-[protein] + A + AMP + diphosphate + H(+). Functionally, catalyzes the 2-thiolation of uridine at the wobble position (U34) of tRNA, leading to the formation of s(2)U34. The chain is tRNA-specific 2-thiouridylase MnmA from Shewanella sp. (strain W3-18-1).